Reading from the N-terminus, the 411-residue chain is Arginine deiminase (411 aa).

The active-site Amidino-cysteine intermediate is Cys401.

Belongs to the arginine deiminase family.

The protein localises to the cytoplasm. It catalyses the reaction L-arginine + H2O = L-citrulline + NH4(+). The protein operates within amino-acid degradation; L-arginine degradation via ADI pathway; carbamoyl phosphate from L-arginine: step 1/2. This is Arginine deiminase from Streptococcus pyogenes serotype M49 (strain NZ131).